The chain runs to 469 residues: Properdin (469 aa).

The signal sequence occupies residues 1–27 (MITEGAQAPRLLLPPLLLLLTLPATGS). 7 consecutive TSP type-1 domains span residues 28–76 (DPVL…QPCR), 77–134 (SPRW…QCCP), 136–191 (MGGW…QSCP), 193–255 (HGAW…PPCP), 257–313 (AGSW…VPCP), 315–377 (DGEW…QHCP), and 379–462 (KGSW…PACK). Disulfide bonds link cysteine 32-cysteine 56, cysteine 43-cysteine 72, and cysteine 57-cysteine 75. C-linked (Man) tryptophan glycans are attached at residues tryptophan 83 and tryptophan 86. 7 cysteine pairs are disulfide-bonded: cysteine 89–cysteine 127, cysteine 93–cysteine 133, cysteine 104–cysteine 111, cysteine 132–cysteine 170, cysteine 148–cysteine 184, cysteine 152–cysteine 190, and cysteine 163–cysteine 174. 3 C-linked (Man) tryptophan glycosylation sites follow: tryptophan 139, tryptophan 142, and tryptophan 145. A glycan (O-linked (Fuc...) threonine) is linked at threonine 151. Tryptophan 196, tryptophan 199, and tryptophan 202 each carry a C-linked (Man) tryptophan glycan. Cystine bridges form between cysteine 205–cysteine 248, cysteine 209–cysteine 254, and cysteine 224–cysteine 238. An O-linked (Fuc...) serine glycan is attached at serine 208. The tract at residues 218–238 (ETRSRKCSAPEPSQKPPGKPC) is disordered. Residues tryptophan 260 and tryptophan 263 are each glycosylated (C-linked (Man) tryptophan). Cystine bridges form between cysteine 269–cysteine 306, cysteine 273–cysteine 312, and cysteine 284–cysteine 296. Threonine 272 carries O-linked (Fuc...) threonine glycosylation. Residues tryptophan 321 and tryptophan 324 are each glycosylated (C-linked (Man) tryptophan). Disulfide bonds link cysteine 327-cysteine 370, cysteine 337-cysteine 376, and cysteine 350-cysteine 360. Positions 351-359 (KGRKFDGHR) are interaction with Complement C3 beta chain. 3 C-linked (Man) tryptophan glycosylation sites follow: tryptophan 382, tryptophan 385, and tryptophan 388. Intrachain disulfides connect cysteine 391/cysteine 455, cysteine 395/cysteine 461, and cysteine 407/cysteine 439. N-linked (GlcNAc...) asparagine glycosylation is present at asparagine 428.

As to quaternary structure, in plasma, properdin exists as dimers, trimers or tetramers in the relative proportions of 26:54:20. Interacts with the pro-C3-convertase enzyme complex (C3b-Bb) comprised of Complement C3 beta chain (C3b) and the Complement factor B Bb fragment (Bb), where it binds (via its TSP type-1 5 domain) with C3b and Bb. This interaction stabilizes the complex and allows it to become the active C3-convertase enzyme complex (C3b-Bb-FP). Interacts with C3b. Interacts with CFB.

It localises to the secreted. A positive regulator of the alternate pathway of complement. It binds to and stabilizes the C3- and C5-convertase enzyme complexes. Inhibits CFI-CFH mediated degradation of Inhibits CFI-CFH mediated degradation of Complement C3 beta chain (C3b). This is Properdin (CFP) from Pongo abelii (Sumatran orangutan).